Reading from the N-terminus, the 354-residue chain is Histidinol-phosphate aminotransferase 1 (354 aa).

Position 209 is an N6-(pyridoxal phosphate)lysine (K209).

Belongs to the class-II pyridoxal-phosphate-dependent aminotransferase family. Histidinol-phosphate aminotransferase subfamily. As to quaternary structure, homodimer. It depends on pyridoxal 5'-phosphate as a cofactor.

It carries out the reaction L-histidinol phosphate + 2-oxoglutarate = 3-(imidazol-4-yl)-2-oxopropyl phosphate + L-glutamate. Its pathway is amino-acid biosynthesis; L-histidine biosynthesis; L-histidine from 5-phospho-alpha-D-ribose 1-diphosphate: step 7/9. In Oceanobacillus iheyensis (strain DSM 14371 / CIP 107618 / JCM 11309 / KCTC 3954 / HTE831), this protein is Histidinol-phosphate aminotransferase 1 (hisC1).